Reading from the N-terminus, the 447-residue chain is Cytochrome P450 BJ-4 (447 aa).

C392 lines the heme pocket.

The protein belongs to the cytochrome P450 family. Heme is required as a cofactor.

Cytochromes P450 are a group of heme-thiolate monooxygenases. They oxidize a variety of structurally unrelated compounds, including steroids, fatty acids, and xenobiotics. This is Cytochrome P450 BJ-4 (cyp117) from Bradyrhizobium diazoefficiens (strain JCM 10833 / BCRC 13528 / IAM 13628 / NBRC 14792 / USDA 110).